The sequence spans 665 residues: Transketolase 1 (665 aa).

Position 26 (His-26) interacts with substrate. Thiamine diphosphate contacts are provided by residues His-66 and 114–116; that span reads GPL. Asp-155 provides a ligand contact to Mg(2+). Thiamine diphosphate contacts are provided by Gly-156 and Asn-185. Positions 185 and 187 each coordinate Mg(2+). Substrate is bound by residues His-261, Arg-358, and Ser-385. His-261 serves as a coordination point for thiamine diphosphate. Glu-412 (proton donor) is an active-site residue. Thiamine diphosphate is bound at residue Phe-438. Positions 462, 470, and 521 each coordinate substrate.

The protein belongs to the transketolase family. As to quaternary structure, homodimer. The cofactor is Mg(2+). Ca(2+) is required as a cofactor. Mn(2+) serves as cofactor. Requires Co(2+) as cofactor. It depends on thiamine diphosphate as a cofactor.

It catalyses the reaction D-sedoheptulose 7-phosphate + D-glyceraldehyde 3-phosphate = aldehydo-D-ribose 5-phosphate + D-xylulose 5-phosphate. In terms of biological role, catalyzes the transfer of a two-carbon ketol group from a ketose donor to an aldose acceptor, via a covalent intermediate with the cofactor thiamine pyrophosphate. The protein is Transketolase 1 (tkt1) of Vibrio cholerae serotype O1 (strain ATCC 39315 / El Tor Inaba N16961).